Here is a 241-residue protein sequence, read N- to C-terminus: Carboxy-S-adenosyl-L-methionine synthase (241 aa).

Residues Tyr38, 63-65 (GCS), 88-89 (DN), 116-117 (DI), Asn131, and Arg198 contribute to the S-adenosyl-L-methionine site.

The protein belongs to the class I-like SAM-binding methyltransferase superfamily. Cx-SAM synthase family. Homodimer.

It catalyses the reaction prephenate + S-adenosyl-L-methionine = carboxy-S-adenosyl-L-methionine + 3-phenylpyruvate + H2O. Its function is as follows. Catalyzes the conversion of S-adenosyl-L-methionine (SAM) to carboxy-S-adenosyl-L-methionine (Cx-SAM). This chain is Carboxy-S-adenosyl-L-methionine synthase, found in Actinobacillus pleuropneumoniae serotype 7 (strain AP76).